The following is a 95-amino-acid chain: Protein NCBP2AS2 homolog (95 aa).

This Ixodes scapularis (Black-legged tick) protein is Protein NCBP2AS2 homolog.